Reading from the N-terminus, the 1000-residue chain is DENN domain-containing protein 2A (1000 aa).

Disordered stretches follow at residues 1–155 (MLEA…LRFQ), 174–328 (DGSA…RKSY), 427–464 (KLLD…LGDL), and 491–525 (KRVK…LKAH). Residues 34–43 (QLNSVPNSGP) show a composition bias toward polar residues. Basic and acidic residues-rich tracts occupy residues 56–70 (IKDK…KEPP), 79–117 (DGQE…DSRA), 140–155 (SQHR…LRFQ), and 221–237 (HLEV…DWKG). Composition is skewed to pro residues over residues 249-258 (PPKPFINPVP) and 288-307 (PPLP…PPPT). The segment covering 427–436 (KLLDTRKLSR) has biased composition (basic and acidic residues). Residues 496–506 (LSQSTESNSGK) show a composition bias toward polar residues. Ser544 is subject to Phosphoserine. The region spanning 559-708 (EYFVVVSLHK…PFPALGKTII (150 aa)) is the uDENN domain. The cDENN domain maps to 730 to 863 (RLEHVDFESL…LQVALEHILE (134 aa)). In terms of domain architecture, dDENN spans 865 to 960 (RNDLACDQDG…QERELRRQDA (96 aa)).

Its subcellular location is the cytoplasm. The protein resides in the cytoskeleton. Its function is as follows. Guanine nucleotide exchange factor (GEF) which may activate RAB9A and RAB9B. Promotes the exchange of GDP to GTP, converting inactive GDP-bound Rab proteins into their active GTP-bound form. May play a role in late endosomes back to trans-Golgi network/TGN transport. The protein is DENN domain-containing protein 2A (Dennd2a) of Mus musculus (Mouse).